The chain runs to 461 residues: Ufm1-specific protease 2 (461 aa).

Residues cysteine 294, aspartate 418, and histidine 420 contribute to the active site.

The protein belongs to the peptidase C78 family. Expressed at high level in brain, kidney, stomach, skeletal muscle, liver, pancreas, spleen and testis.

Its subcellular location is the endoplasmic reticulum. The protein resides in the cytoplasm. It is found in the nucleus. Functionally, thiol-dependent isopeptidase that specifically cleaves UFM1, a ubiquitin-like modifier protein, from conjugated proteins, such as CD274/PD-L1, CYB5R3, DDRGK1, MRE11, RPL26/uL24, TRIP4 and RPL26/uL24. While it is also able to mediate the processing of UFM1 precursors, a prerequisite for conjugation reactions, UFSP2 mainly acts as a protein deUFMylase that mediates deconjugation of UFM1 from target proteins. Mediates deUFMylation of RPL26/uL24, a critical step to release the UFM1 ribosome E3 ligase (UREL) complex during the recycling of 60S ribosome subunits from the endoplasmic reticulum. Catalyzes deUFMylation of TRIP4, regulating intracellular nuclear receptors transactivation and thereby regulate cell proliferation and differentiation. This Mus musculus (Mouse) protein is Ufm1-specific protease 2.